We begin with the raw amino-acid sequence, 76 residues long: DNA polymerase III subunit theta (76 aa).

In terms of assembly, the DNA polymerase holoenzyme is a complex that contains 10 different types of subunits. These subunits are organized into 3 functionally essential subassemblies: the pol III core, the beta sliding clamp processivity factor and the clamp-loading complex. The pol III core (subunits alpha,epsilon and theta) contains the polymerase and the 3'-5' exonuclease proofreading activities. The polymerase is tethered to the template via the sliding clamp processivity factor. The clamp-loading complex assembles the beta processivity factor onto the primer template and plays a central role in the organization and communication at the replication fork. This complex contains delta, delta', psi and chi, and copies of either or both of two different DnaX proteins, gamma and tau. The composition of the holoenzyme is, therefore: (alpha,epsilon,theta)[2]-(gamma/tau)[3]-delta,delta', psi,chi-beta[4].

The enzyme catalyses DNA(n) + a 2'-deoxyribonucleoside 5'-triphosphate = DNA(n+1) + diphosphate. DNA polymerase III is a complex, multichain enzyme responsible for most of the replicative synthesis in bacteria. This DNA polymerase also exhibits 3' to 5' exonuclease activity. In terms of biological role, the exact function of the theta subunit is unknown. This chain is DNA polymerase III subunit theta (holE), found in Escherichia coli O157:H7.